We begin with the raw amino-acid sequence, 119 residues long: uncharacterized protein (119 aa).

Positions 86-119 are disordered; sequence KKQRMKMLTEQEEEEEEEEEEPPKPKKKVINRKK. Acidic residues predominate over residues 95 to 106; the sequence is EQEEEEEEEEEE. Over residues 110–119 the composition is skewed to basic residues; it reads PKKKVINRKK.

This is an uncharacterized protein from Sputnik virophage.